A 172-amino-acid chain; its full sequence is Lipoprotein signal peptidase (172 aa).

Transmembrane regions (helical) follow at residues 70-90 (ERWLLVAGTALIAAGIVAWIW) and 94-114 (AKGDVVALGLVLGGAIGNIAD). Residues Asp123 and Asp142 contribute to the active site. Residues 134-154 (PFLVFNVADAAITIGVLILVL) traverse the membrane as a helical segment.

This sequence belongs to the peptidase A8 family.

Its subcellular location is the cell inner membrane. It carries out the reaction Release of signal peptides from bacterial membrane prolipoproteins. Hydrolyzes -Xaa-Yaa-Zaa-|-(S,diacylglyceryl)Cys-, in which Xaa is hydrophobic (preferably Leu), and Yaa (Ala or Ser) and Zaa (Gly or Ala) have small, neutral side chains.. The protein operates within protein modification; lipoprotein biosynthesis (signal peptide cleavage). Functionally, this protein specifically catalyzes the removal of signal peptides from prolipoproteins. This chain is Lipoprotein signal peptidase, found in Rhizorhabdus wittichii (strain DSM 6014 / CCUG 31198 / JCM 15750 / NBRC 105917 / EY 4224 / RW1) (Sphingomonas wittichii).